A 93-amino-acid polypeptide reads, in one-letter code: Cell division topological specificity factor (93 aa).

The protein belongs to the MinE family.

Its function is as follows. Prevents the cell division inhibition by proteins MinC and MinD at internal division sites while permitting inhibition at polar sites. This ensures cell division at the proper site by restricting the formation of a division septum at the midpoint of the long axis of the cell. This Halorhodospira halophila (strain DSM 244 / SL1) (Ectothiorhodospira halophila (strain DSM 244 / SL1)) protein is Cell division topological specificity factor.